A 730-amino-acid chain; its full sequence is uncharacterized protein (730 aa).

Residues Ser82 and Ser89 each carry the phosphoserine modification. 2 disordered regions span residues 82–114 and 447–468; these read SPVRRHNSIQPSNSGKNSTEKTSTKGSRTTGSY and NTNHNFTTNNNNENESNDSKNE. Residues 89–98 are compositionally biased toward polar residues; it reads SIQPSNSGKN. Residues 449 to 460 are compositionally biased toward low complexity; that stretch reads NHNFTTNNNNEN. A phosphoserine mark is found at Ser483 and Ser651.

This is an uncharacterized protein from Saccharomyces cerevisiae (strain ATCC 204508 / S288c) (Baker's yeast).